We begin with the raw amino-acid sequence, 476 residues long: Protein transport protein Sec61 subunit alpha isoform 1 (476 aa).

The Cytoplasmic segment spans residues 2-28 (AIKFLEVIKPFCVILPEIQKPERKIQF). A helical transmembrane segment spans residues 29 to 46 (KEKVLWTAITLFIFLVCC). Residues 47 to 80 (QIPLFGIMSSDSADPFYWMRVILASNRGTLMELG) are Lumenal-facing. Residues 81–97 (ISPIVTSGLIMQLLAGA) form a helical membrane-spanning segment. The Cytoplasmic portion of the chain corresponds to 98-109 (KIIEVGDTPKDR). Residues 110-131 (ALFNGAQKLFGMIITIGQSIVY) form a helical membrane-spanning segment. Over 132–148 (VMTGMYGDPSEMGAGIC) the chain is Lumenal. The chain crosses the membrane as a helical span at residues 149–167 (LLITIQLFVAGLIVLLLDE). Residues 168–177 (LLQKGYGLGS) lie on the Cytoplasmic side of the membrane. The helical transmembrane segment at 178–196 (GISLFIATNICETIVWKAF) threads the bilayer. The Lumenal portion of the chain corresponds to 197–241 (SPTTVNTGRGMEFEGAIIALFHLLATRTDKVRALREAFYRQNLPN). A helical transmembrane segment spans residues 242 to 259 (LMNLIATIFVFAVVIYFQ). At 260 to 285 (GFRVDLPIKSARYRGQYNTYPIKLFY) the chain is on the cytoplasmic side. A helical transmembrane segment spans residues 286–306 (TSNIPIILQSALVSNLYVISQ). Residues 307 to 356 (MLSARFSGNLLVSLLGTWSDTSSGGPARAYPVGGLCHYLSPPESFGSVLE) are Lumenal-facing. A helical membrane pass occupies residues 357 to 379 (DPVHAVVYIVFMLGSCAFFSKTW). Topologically, residues 380–420 (IEVSGSSAKDVAKQLKEQQMVMRGHRETSMVHELNRYIPTA) are cytoplasmic. A helical transmembrane segment spans residues 421–437 (AAFGGLCIGALSVLADF). Topologically, residues 438 to 443 (LGAIGS) are lumenal. Residues 444-458 (GTGILLAVTIIYQYF) form a helical membrane-spanning segment. Residues 459-476 (EIFVKEQSEVGSMGALLF) are Cytoplasmic-facing.

The protein belongs to the SecY/SEC61-alpha family. In terms of assembly, the SEC61 channel-forming translocon complex consists of channel-forming core components SEC61A1, SEC61B and SEC61G and different auxiliary components such as SEC62 and SEC63. The SEC61 channel associates with the multi-pass translocon (MPT) complex.

It localises to the endoplasmic reticulum membrane. Its function is as follows. Component of SEC61 channel-forming translocon complex that mediates transport of signal peptide-containing precursor polypeptides across the endoplasmic reticulum (ER). Forms a ribosome receptor and a gated pore in the ER membrane, both functions required for cotranslational translocation of nascent polypeptides. May cooperate with auxiliary protein SEC62, SEC63 and HSPA5/BiP to enable post-translational transport of small presecretory proteins. The SEC61 channel is also involved in ER membrane insertion of transmembrane proteins: it mediates membrane insertion of the first few transmembrane segments of proteins, while insertion of subsequent transmembrane regions of multi-pass membrane proteins is mediated by the multi-pass translocon (MPT) complex. The SEC61 channel cooperates with the translocating protein TRAM1 to import nascent proteins into the ER. Controls the passive efflux of calcium ions from the ER lumen to the cytosol through SEC61 channel, contributing to the maintenance of cellular calcium homeostasis. Plays a critical role in nephrogenesis, specifically at pronephros stage. The chain is Protein transport protein Sec61 subunit alpha isoform 1 (SEC61A1) from Canis lupus familiaris (Dog).